Consider the following 312-residue polypeptide: DNA-directed RNA polymerase subunit alpha (312 aa).

Residues 1-226 are alpha N-terminal domain (alpha-NTD); that stretch reads MIEFEKPKIT…DHLNLFVDLS (226 aa). Residues 243 to 312 are alpha C-terminal domain (alpha-CTD); sequence TERVLDKIIE…ELGLSLKKRK (70 aa).

Belongs to the RNA polymerase alpha chain family. Homodimer. The RNAP catalytic core consists of 2 alpha, 1 beta, 1 beta' and 1 omega subunit. When a sigma factor is associated with the core the holoenzyme is formed, which can initiate transcription.

The enzyme catalyses RNA(n) + a ribonucleoside 5'-triphosphate = RNA(n+1) + diphosphate. Functionally, DNA-dependent RNA polymerase catalyzes the transcription of DNA into RNA using the four ribonucleoside triphosphates as substrates. The sequence is that of DNA-directed RNA polymerase subunit alpha from Lactococcus lactis subsp. cremoris (strain SK11).